Reading from the N-terminus, the 564-residue chain is MFS-type efflux transporter ffsH (564 aa).

Positions 1-18 (MSEAEKKASQDAQHKEPM) are enriched in basic and acidic residues. Residues 1 to 37 (MSEAEKKASQDAQHKEPMADSETQLDSDSAPSSQAEK) form a disordered region. A compositionally biased stretch (polar residues) spans 21–35 (SETQLDSDSAPSSQA). A run of 4 helical transmembrane segments spans residues 43–63 (YPLSFWLAFGALCLTGLISAM), 98–118 (YVMILATAIFLLGSGICGGAN), 131–151 (GIGAGGINMLVDLIICDLVPM), and 157–177 (FIGLLFLFVSIGTTSGPIIGG). Residue asparagine 182 is glycosylated (N-linked (GlcNAc...) asparagine). 9 consecutive transmembrane segments (helical) span residues 187 to 207 (WVFYINLPMGGAALVLLVLFL), 226 to 246 (VVGNAILVGATFSILYALTYG), 254 to 274 (AANIVAPFVLGFVGLGIFIAW), 300 to 320 (FFISFMTMILAFWVVYFYPVY), 334 to 354 (VHLLPFEVSFPIFAAVGGGLV), 362 to 382 (PIHMVATSIVTIAIGASSVLT), 389 to 409 (AWAVLQIFIGMGLGSLISTTL), 427 to 447 (TWAYMRSLGTIWGVSVPAAIF), and 502 to 522 (VWLVSIAFGAVTVLSTLFEKE). The tract at residues 540–564 (GDAKGDVERGEGQNDSREGGQNENV) is disordered. Asparagine 553 is a glycosylation site (N-linked (GlcNAc...) asparagine).

It belongs to the major facilitator superfamily.

The protein localises to the cell membrane. In terms of biological role, MFS-type efflux transporter; part of the gene cluster that mediates the biosynthesis of the cytotoxic leucine-containing cytochalasans, including aspochalasin C, aspochalasin E, TMC-169, flavichalasine F, aspergillin PZ, aspochalasin M and flavichalasine G. FfsH might be involved in the excretion of cytochalasans. The chain is MFS-type efflux transporter ffsH from Aspergillus flavipes.